Reading from the N-terminus, the 177-residue chain is Large ribosomal subunit protein uL6 (177 aa).

It belongs to the universal ribosomal protein uL6 family. In terms of assembly, part of the 50S ribosomal subunit.

Its function is as follows. This protein binds to the 23S rRNA, and is important in its secondary structure. It is located near the subunit interface in the base of the L7/L12 stalk, and near the tRNA binding site of the peptidyltransferase center. The chain is Large ribosomal subunit protein uL6 from Halorhodospira halophila (strain DSM 244 / SL1) (Ectothiorhodospira halophila (strain DSM 244 / SL1)).